A 229-amino-acid chain; its full sequence is Enolase-phosphatase E1 (229 aa).

Residues 208–218 are compositionally biased toward polar residues; the sequence is DTQSTHRQVSS. Residues 208 to 229 form a disordered region; the sequence is DTQSTHRQVSSFDDIHPEQIPT. Residues 220–229 show a composition bias toward basic and acidic residues; it reads DDIHPEQIPT.

The protein belongs to the HAD-like hydrolase superfamily. MasA/MtnC family. Monomer. It depends on Mg(2+) as a cofactor.

It carries out the reaction 5-methylsulfanyl-2,3-dioxopentyl phosphate + H2O = 1,2-dihydroxy-5-(methylsulfanyl)pent-1-en-3-one + phosphate. It functions in the pathway amino-acid biosynthesis; L-methionine biosynthesis via salvage pathway; L-methionine from S-methyl-5-thio-alpha-D-ribose 1-phosphate: step 3/6. It participates in amino-acid biosynthesis; L-methionine biosynthesis via salvage pathway; L-methionine from S-methyl-5-thio-alpha-D-ribose 1-phosphate: step 4/6. In terms of biological role, bifunctional enzyme that catalyzes the enolization of 2,3-diketo-5-methylthiopentyl-1-phosphate (DK-MTP-1-P) into the intermediate 2-hydroxy-3-keto-5-methylthiopentenyl-1-phosphate (HK-MTPenyl-1-P), which is then dephosphorylated to form the acireductone 1,2-dihydroxy-3-keto-5-methylthiopentene (DHK-MTPene). This is Enolase-phosphatase E1 from Cronobacter sakazakii (strain ATCC BAA-894) (Enterobacter sakazakii).